The chain runs to 180 residues: MTRLKDKYLNEAAPALIEKFKYSSRMQVPKLEKVVLNMGVGEVKDNPKAMDSAVNDMTLITGQKPIVTKAKKSVAAFKLRQGMNIGCKVTLRGDRMYEFVDKLFNVAIPRVRDFRGLSSNSFDGRGNYSMGIKDQLIFPEIEYDKVDKLRGMDIVFVTTAKSDEEAKELLKLLGMPFSQN.

The protein belongs to the universal ribosomal protein uL5 family. In terms of assembly, part of the 50S ribosomal subunit; part of the 5S rRNA/L5/L18/L25 subcomplex. Contacts the 5S rRNA and the P site tRNA. Forms a bridge to the 30S subunit in the 70S ribosome.

In terms of biological role, this is one of the proteins that bind and probably mediate the attachment of the 5S RNA into the large ribosomal subunit, where it forms part of the central protuberance. In the 70S ribosome it contacts protein S13 of the 30S subunit (bridge B1b), connecting the 2 subunits; this bridge is implicated in subunit movement. Contacts the P site tRNA; the 5S rRNA and some of its associated proteins might help stabilize positioning of ribosome-bound tRNAs. The protein is Large ribosomal subunit protein uL5 of Ruminiclostridium cellulolyticum (strain ATCC 35319 / DSM 5812 / JCM 6584 / H10) (Clostridium cellulolyticum).